We begin with the raw amino-acid sequence, 370 residues long: 3-dehydroquinate synthase (370 aa).

NAD(+)-binding positions include 107–111, 131–132, lysine 144, and lysine 153; these read GVIGD and TS. Glutamate 186, histidine 249, and histidine 267 together coordinate Zn(2+).

This sequence belongs to the sugar phosphate cyclases superfamily. Dehydroquinate synthase family. The cofactor is Co(2+). Zn(2+) is required as a cofactor. It depends on NAD(+) as a cofactor.

Its subcellular location is the cytoplasm. It carries out the reaction 7-phospho-2-dehydro-3-deoxy-D-arabino-heptonate = 3-dehydroquinate + phosphate. Its pathway is metabolic intermediate biosynthesis; chorismate biosynthesis; chorismate from D-erythrose 4-phosphate and phosphoenolpyruvate: step 2/7. Its function is as follows. Catalyzes the conversion of 3-deoxy-D-arabino-heptulosonate 7-phosphate (DAHP) to dehydroquinate (DHQ). The sequence is that of 3-dehydroquinate synthase from Roseobacter denitrificans (strain ATCC 33942 / OCh 114) (Erythrobacter sp. (strain OCh 114)).